The following is a 349-amino-acid chain: S-adenosylmethionine:tRNA ribosyltransferase-isomerase (349 aa).

Belongs to the QueA family. In terms of assembly, monomer.

The protein localises to the cytoplasm. The enzyme catalyses 7-aminomethyl-7-carbaguanosine(34) in tRNA + S-adenosyl-L-methionine = epoxyqueuosine(34) in tRNA + adenine + L-methionine + 2 H(+). It functions in the pathway tRNA modification; tRNA-queuosine biosynthesis. Transfers and isomerizes the ribose moiety from AdoMet to the 7-aminomethyl group of 7-deazaguanine (preQ1-tRNA) to give epoxyqueuosine (oQ-tRNA). The sequence is that of S-adenosylmethionine:tRNA ribosyltransferase-isomerase from Azotobacter vinelandii (strain DJ / ATCC BAA-1303).